The following is a 261-amino-acid chain: MASPDWGYDDKNGPEQWSKLYPIANGNNQSPVDIKTSEAKHDTSLKPISVSYNPATAKEIINVGHSFHVNFEDNDNRSVLKGGPFSDSYRLFQFHFHWGSSNEYGSEHTVDGVKYSSELHIVHWNSAKYSSLAEAVSKADGLAVIGVLMKVGEANPKLQKVLDALHAIKTKGKRAPFTNFDPSTLLPSSLDFWTYSGSLTHPPLYESVTWIICKESISVSSEQLAQFRSLLSNVEGDNPVPSQRNNRPTQPLKGRTVRASF.

Alanine 2 is subject to N-acetylalanine. In terms of domain architecture, Alpha-carbonic anhydrase spans 4–261 (PDWGYDDKNG…LKGRTVRASF (258 aa)). Histidine 65 acts as the Proton donor/acceptor in catalysis. Zn(2+)-binding residues include histidine 95, histidine 97, and histidine 120. Residues threonine 200 and 200–201 (TH) contribute to the substrate site. Residues 235–261 (EGDNPVPSQRNNRPTQPLKGRTVRASF) are disordered. Positions 240–249 (VPSQRNNRPT) are enriched in polar residues.

Belongs to the alpha-carbonic anhydrase family. Zn(2+) serves as cofactor.

It is found in the cytoplasm. It carries out the reaction hydrogencarbonate + H(+) = CO2 + H2O. It catalyses the reaction urea = cyanamide + H2O. Inhibited by acetazolamide. In terms of biological role, catalyzes the reversible hydration of carbon dioxide. Can hydrate cyanamide to urea. The chain is Carbonic anhydrase 1 (CA1) from Macaca nemestrina (Pig-tailed macaque).